The primary structure comprises 177 residues: Thymidine kinase (177 aa).

ATP is bound at residue Gly-11–Ser-18. Glu-83 (proton acceptor) is an active-site residue. Phe-113 is a binding site for substrate. Residues Cys-138 and Cys-141 each coordinate Zn(2+). Ile-157 to Gly-161 lines the substrate pocket. Zn(2+) is bound by residues Cys-170 and Cys-173.

It belongs to the thymidine kinase family. As to quaternary structure, homotetramer. Two molecules of substrate bind to each enzyme tetramer.

It carries out the reaction thymidine + ATP = dTMP + ADP + H(+). In terms of biological role, phosphorylates thymidine and thymidine analogs, such as azidothymidine (AZT). Part of the salvage pathway for pyrimidine deoxyribonucleotide synthesis. The polypeptide is Thymidine kinase (OPG101) (Vaccinia virus (strain Copenhagen) (VACV)).